Reading from the N-terminus, the 222-residue chain is uncharacterized protein (222 aa).

Positions 142-222 (ARRGGCVHPP…LPDPPSAGHL (81 aa)) are disordered. A compositionally biased stretch (low complexity) spans 160–169 (QSRSISSRRA). Residues 182–196 (PRRRPHRHRTRPQTR) are compositionally biased toward basic residues.

This sequence belongs to the Rv1128c/1148c/1588c/1702c/1945/3466 family.

This is an uncharacterized protein from Mycobacterium tuberculosis (strain ATCC 25618 / H37Rv).